The following is a 105-amino-acid chain: Nucleoid-associated protein SE_2306 (105 aa).

Positions 1-40 (MRGGGNMQQMMKQMQKMQKKMAQEQEKLKEERVAGTAGGG) are disordered. Positions 7–16 (MQQMMKQMQK) are enriched in low complexity. Basic and acidic residues predominate over residues 21–33 (MAQEQEKLKEERV).

This sequence belongs to the YbaB/EbfC family. As to quaternary structure, homodimer.

It is found in the cytoplasm. Its subcellular location is the nucleoid. Functionally, binds to DNA and alters its conformation. May be involved in regulation of gene expression, nucleoid organization and DNA protection. This Staphylococcus epidermidis (strain ATCC 12228 / FDA PCI 1200) protein is Nucleoid-associated protein SE_2306.